Consider the following 430-residue polypeptide: C4-dicarboxylate transport protein (430 aa).

A run of 9 helical transmembrane segments spans residues 8–28, 44–64, 76–96, 144–164, 184–204, 222–242, 289–309, 326–346, and 352–372; these read SLYFQVLAAITIGILLGHFYP, LIKMIIAPVIFCTVVTGIAGM, AALLYFEVVSTIALIIGLVVV, AFASGNILQVLLFAVMFGFAL, VIFGVINMIMKLAPLGAFGAM, LILCFYLTCILFVFLVLGSIA, VVGLVIPTGYSFNLDGTSIYL, IWHQITLLVVLLLSSKGAAGV, and IVLAATLSAVGHLPVAGLALI.

It belongs to the dicarboxylate/amino acid:cation symporter (DAACS) (TC 2.A.23) family.

The protein resides in the cell inner membrane. In terms of biological role, responsible for the transport of dicarboxylates such as succinate, fumarate, and malate from the periplasm across the membrane. This chain is C4-dicarboxylate transport protein, found in Pectobacterium atrosepticum (strain SCRI 1043 / ATCC BAA-672) (Erwinia carotovora subsp. atroseptica).